The chain runs to 704 residues: Elongation factor G (704 aa).

The tr-type G domain occupies 8–291 (DKVRNIGIMA…AVVEYLASPV (284 aa)). Residues 17–24 (AHIDAGKT), 90–94 (DTPGH), and 144–147 (NKMD) each bind GTP.

This sequence belongs to the TRAFAC class translation factor GTPase superfamily. Classic translation factor GTPase family. EF-G/EF-2 subfamily.

It is found in the cytoplasm. Functionally, catalyzes the GTP-dependent ribosomal translocation step during translation elongation. During this step, the ribosome changes from the pre-translocational (PRE) to the post-translocational (POST) state as the newly formed A-site-bound peptidyl-tRNA and P-site-bound deacylated tRNA move to the P and E sites, respectively. Catalyzes the coordinated movement of the two tRNA molecules, the mRNA and conformational changes in the ribosome. In Chlorobium limicola (strain DSM 245 / NBRC 103803 / 6330), this protein is Elongation factor G.